A 466-amino-acid chain; its full sequence is 3-isopropylmalate dehydratase large subunit (466 aa).

3 residues coordinate [4Fe-4S] cluster: C347, C407, and C410.

The protein belongs to the aconitase/IPM isomerase family. LeuC type 1 subfamily. Heterodimer of LeuC and LeuD. It depends on [4Fe-4S] cluster as a cofactor.

It carries out the reaction (2R,3S)-3-isopropylmalate = (2S)-2-isopropylmalate. The protein operates within amino-acid biosynthesis; L-leucine biosynthesis; L-leucine from 3-methyl-2-oxobutanoate: step 2/4. Its function is as follows. Catalyzes the isomerization between 2-isopropylmalate and 3-isopropylmalate, via the formation of 2-isopropylmaleate. This chain is 3-isopropylmalate dehydratase large subunit, found in Escherichia coli O157:H7.